The following is a 128-amino-acid chain: Sulfurtransferase TusD (128 aa).

Cys78 acts as the Cysteine persulfide intermediate in catalysis.

The protein belongs to the DsrE/TusD family. Heterohexamer, formed by a dimer of trimers. The hexameric TusBCD complex contains 2 copies each of TusB, TusC and TusD. The TusBCD complex interacts with TusE.

The protein resides in the cytoplasm. Part of a sulfur-relay system required for 2-thiolation of 5-methylaminomethyl-2-thiouridine (mnm(5)s(2)U) at tRNA wobble positions. Accepts sulfur from TusA and transfers it in turn to TusE. The chain is Sulfurtransferase TusD from Escherichia fergusonii (strain ATCC 35469 / DSM 13698 / CCUG 18766 / IAM 14443 / JCM 21226 / LMG 7866 / NBRC 102419 / NCTC 12128 / CDC 0568-73).